The chain runs to 796 residues: RNA cytosine-C(5)-methyltransferase NSUN2 (796 aa).

Residues 1 to 11 are compositionally biased toward basic residues; sequence MGRRARDRRRQ. Residues 1–36 form a disordered region; that stretch reads MGRRARDRRRQLQPQQRRERSGGGGGGGDDQAGWAG. Residues 22–36 are compositionally biased toward gly residues; that stretch reads GGGGGGGDDQAGWAG. S-adenosyl-L-methionine contacts are provided by residues 184–190, Asp215, Asp242, and Asp268; that span reads CAAPGSK. The active-site Nucleophile is Cys321. Disordered stretches follow at residues 435-501 and 707-796; these read WNKR…CGPP and RKEG…NVKD. Composition is skewed to basic and acidic residues over residues 467–483, 708–721, and 733–746; these read ATEKPTLAEDEEPKKVQ, KEGESEGKTEEEVQ, and VEDKERDAVTKMEA. Polar residues predominate over residues 774-783; that stretch reads CSKNTNSHIN. The segment covering 784-796 has biased composition (basic and acidic residues); sequence QESKDMNTNNVKD.

This sequence belongs to the class I-like SAM-binding methyltransferase superfamily. RsmB/NOP family. TRM4 subfamily.

The protein resides in the nucleus. It is found in the nucleolus. Its subcellular location is the cytoplasm. It localises to the mitochondrion. The protein localises to the cytoskeleton. The protein resides in the spindle. It is found in the secreted. Its subcellular location is the extracellular exosome. It catalyses the reaction cytidine(48) in tRNA + S-adenosyl-L-methionine = 5-methylcytidine(48) in tRNA + S-adenosyl-L-homocysteine + H(+). It carries out the reaction cytidine(49) in tRNA + S-adenosyl-L-methionine = 5-methylcytidine(49) in tRNA + S-adenosyl-L-homocysteine + H(+). The catalysed reaction is cytidine(50) in tRNA + S-adenosyl-L-methionine = 5-methylcytidine(50) in tRNA + S-adenosyl-L-homocysteine + H(+). The enzyme catalyses cytidine(34) in tRNA precursor + S-adenosyl-L-methionine = 5-methylcytidine(34) in tRNA precursor + S-adenosyl-L-homocysteine + H(+). It catalyses the reaction a cytidine in mRNA + S-adenosyl-L-methionine = a 5-methylcytidine in mRNA + S-adenosyl-L-homocysteine + H(+). Functionally, RNA cytosine C(5)-methyltransferase that methylates cytosine to 5-methylcytosine (m5C) in various RNAs, such as tRNAs, mRNAs and some long non-coding RNAs (lncRNAs). Involved in various processes, such as epidermal stem cell differentiation, testis differentiation and maternal to zygotic transition during early development: acts by increasing protein synthesis; cytosine C(5)-methylation promoting tRNA stability and preventing mRNA decay. Methylates cytosine to 5-methylcytosine (m5C) at positions 34 and 48 of intron-containing tRNA(Leu)(CAA) precursors, and at positions 48, 49 and 50 of tRNA(Gly)(GCC) precursors. tRNA methylation is required generation of RNA fragments derived from tRNAs (tRFs). Also mediates C(5)-methylation of mitochondrial tRNAs. Catalyzes cytosine C(5)-methylation of mRNAs, leading to stabilize them and prevent mRNA decay. Cytosine C(5)-methylation of mRNAs also regulates mRNA export. Also mediates cytosine C(5)-methylation of non-coding RNAs, such as vault RNAs (vtRNAs), promoting their processing into regulatory small RNAs. Required for proper spindle assembly and chromosome segregation, independently of its methyltransferase activity. The protein is RNA cytosine-C(5)-methyltransferase NSUN2 of Gallus gallus (Chicken).